Consider the following 212-residue polypeptide: Large ribosomal subunit protein uL3 (212 aa).

Positions 128-146 are enriched in basic residues; that stretch reads RHGASRGPMKHGSKYHRRT. The interval 128-164 is disordered; the sequence is RHGASRGPMKHGSKYHRRTGSLGAKGPARVFKGRNLP.

Belongs to the universal ribosomal protein uL3 family. Part of the 50S ribosomal subunit. Forms a cluster with proteins L14 and L19.

One of the primary rRNA binding proteins, it binds directly near the 3'-end of the 23S rRNA, where it nucleates assembly of the 50S subunit. The protein is Large ribosomal subunit protein uL3 of Desulfitobacterium hafniense (strain Y51).